Consider the following 429-residue polypeptide: Cytochrome P450 BJ-3 (429 aa).

A heme-binding site is contributed by Cys376.

This sequence belongs to the cytochrome P450 family. Heme is required as a cofactor.

Functionally, cytochromes P450 are a group of heme-thiolate monooxygenases. They oxidize a variety of structurally unrelated compounds, including steroids, fatty acids, and xenobiotics. The protein is Cytochrome P450 BJ-3 (cyp114) of Bradyrhizobium diazoefficiens (strain JCM 10833 / BCRC 13528 / IAM 13628 / NBRC 14792 / USDA 110).